Consider the following 267-residue polypeptide: Tryptophan synthase alpha chain (267 aa).

Residues Glu47 and Asp58 each act as proton acceptor in the active site.

It belongs to the TrpA family. In terms of assembly, tetramer of two alpha and two beta chains.

It carries out the reaction (1S,2R)-1-C-(indol-3-yl)glycerol 3-phosphate + L-serine = D-glyceraldehyde 3-phosphate + L-tryptophan + H2O. Its pathway is amino-acid biosynthesis; L-tryptophan biosynthesis; L-tryptophan from chorismate: step 5/5. Its function is as follows. The alpha subunit is responsible for the aldol cleavage of indoleglycerol phosphate to indole and glyceraldehyde 3-phosphate. The chain is Tryptophan synthase alpha chain from Prosthecochloris aestuarii (strain DSM 271 / SK 413).